Consider the following 335-residue polypeptide: Protein MET1, chloroplastic (335 aa).

Residues 1 to 18 (MSLAPSSYPSLYSSPSLP) are compositionally biased toward low complexity. Disordered regions lie at residues 1–29 (MSLA…NPSL) and 66–88 (SETE…KYET). The N-terminal 73 residues, 1–73 (MSLAPSSYPS…KASETESSAK (73 aa)), are a transit peptide targeting the chloroplast. Residues 19 to 29 (RTQQTKQNPSL) show a composition bias toward polar residues. Positions 78 to 88 (GDGEEEEKYET) are enriched in acidic residues. Positions 97-136 (YGLKFRKGRDGGTYIDAILPGGSADKTGKFTVGDRVIATS) constitute a PDZ domain. TPR repeat units follow at residues 217 to 250 (REKD…KPTP), 254 to 287 (SVAS…GYED), and 289 to 323 (KRIR…ESAI).

As to quaternary structure, interacts directly with stromal loops of photosystem II (PSII) core components psbB (CP47) and psbC (CP43). Associates with PSII subcomplexes formed during the PSII repair cycle (e.g. PSII dimers, PSII monomers, CP43-less PSII monomerand PSII reaction centers). Post-translationally, phosphorylated rapidly (e.g. within 5 minutes) but transiently at threonine and serine residues after wounding. Expressed in leaves (at protein level). Mostly expressed in leaves, stems and siliques, and, to a lower extent, in flowers and senescent leaves, but not present in roots (at protein level).

Its subcellular location is the plastid. The protein localises to the chloroplast membrane. It localises to the chloroplast thylakoid membrane. Its function is as follows. Involved in photosystem II supercomplex formation and repair, probably acting as a psbB/psbC chaperone on the stromal side of the membrane. The polypeptide is Protein MET1, chloroplastic (Arabidopsis thaliana (Mouse-ear cress)).